Consider the following 441-residue polypeptide: N-acetyl-S-(2-succino)cysteine monooxygenase (441 aa).

6 residues coordinate FMN: aspartate 59, threonine 96, histidine 146, tyrosine 150, serine 220, and serine 221.

Belongs to the NtaA/SnaA/DszA monooxygenase family. In terms of assembly, homodimer. Requires FMN as cofactor.

It catalyses the reaction N-acetyl-S-(2-succino)-L-cysteine + NADH + O2 + H(+) = N-acetyl-L-cysteine + oxaloacetate + NAD(+) + H2O. It participates in amino-acid biosynthesis; L-cysteine biosynthesis. Functionally, catalyzes the oxidative cleavage of the C-S bond of N-acetyl-S-(2-succino)cysteine, forming oxaloacetate and N-acetylcysteine (NAC). Is involved in a S-(2-succino)cysteine (2SC) degradation pathway that allows B.subtilis to grow on 2SC as a sole sulfur source, via its metabolization to cysteine. Shows almost no activity on S-succinylglutathione and 2SC. This Bacillus subtilis (strain 168) protein is N-acetyl-S-(2-succino)cysteine monooxygenase.